A 392-amino-acid chain; its full sequence is Speckle-type POZ protein-like (392 aa).

Residues 31–161 form the MATH domain; sequence KFSYMWTINN…DDKLTLFCEV (131 aa). A BTB domain is found at 200–267; the sequence is TDCSFFVRGQ…IYTGRAPNLD (68 aa).

The protein belongs to the Tdpoz family. Homodimer. Heterodimer with SPOP. Component of cullin-RING-based BCR (BTB-CUL3-RBX1) E3 ubiquitin-protein ligase complexes containing homodimeric SPOPL or the heterodimer formed by SPOP and SPOPL. Interacts with CUL3 and MACROH2A1.

Its subcellular location is the nucleus. The protein operates within protein modification; protein ubiquitination. Its function is as follows. Component of a cullin-RING-based BCR (BTB-CUL3-RBX1) E3 ubiquitin-protein ligase complex that mediates the ubiquitination and subsequent proteasomal degradation of target proteins, but with relatively low efficiency. Cullin-RING-based BCR (BTB-CUL3-RBX1) E3 ubiquitin-protein ligase complexes containing homodimeric SPOPL or the heterodimer formed by SPOP and SPOPL are less efficient than ubiquitin ligase complexes containing only SPOP. May function to down-regulate the activity of cullin-RING-based BCR (BTB-CUL3-RBX1) E3 ubiquitin-protein ligase complexes that contain SPOP. The sequence is that of Speckle-type POZ protein-like (SPOPL) from Homo sapiens (Human).